We begin with the raw amino-acid sequence, 344 residues long: tRNA N6-adenosine threonylcarbamoyltransferase (344 aa).

Fe cation-binding residues include His113 and His117. Substrate-binding positions include 135–139 (LVSGG), Asp169, Gly182, Asp186, and Asn278. Asp306 contributes to the Fe cation binding site. Residues 325-344 (ESPISVGTDPSLSVETPQVF) form a disordered region. Over residues 326–344 (SPISVGTDPSLSVETPQVF) the composition is skewed to polar residues.

The protein belongs to the KAE1 / TsaD family. The cofactor is Fe(2+).

Its subcellular location is the cytoplasm. It catalyses the reaction L-threonylcarbamoyladenylate + adenosine(37) in tRNA = N(6)-L-threonylcarbamoyladenosine(37) in tRNA + AMP + H(+). Its function is as follows. Required for the formation of a threonylcarbamoyl group on adenosine at position 37 (t(6)A37) in tRNAs that read codons beginning with adenine. Is involved in the transfer of the threonylcarbamoyl moiety of threonylcarbamoyl-AMP (TC-AMP) to the N6 group of A37, together with TsaE and TsaB. TsaD likely plays a direct catalytic role in this reaction. This chain is tRNA N6-adenosine threonylcarbamoyltransferase, found in Corynebacterium glutamicum (strain ATCC 13032 / DSM 20300 / JCM 1318 / BCRC 11384 / CCUG 27702 / LMG 3730 / NBRC 12168 / NCIMB 10025 / NRRL B-2784 / 534).